The following is a 156-amino-acid chain: SsrA-binding protein (156 aa).

The protein belongs to the SmpB family.

The protein resides in the cytoplasm. Its function is as follows. Required for rescue of stalled ribosomes mediated by trans-translation. Binds to transfer-messenger RNA (tmRNA), required for stable association of tmRNA with ribosomes. tmRNA and SmpB together mimic tRNA shape, replacing the anticodon stem-loop with SmpB. tmRNA is encoded by the ssrA gene; the 2 termini fold to resemble tRNA(Ala) and it encodes a 'tag peptide', a short internal open reading frame. During trans-translation Ala-aminoacylated tmRNA acts like a tRNA, entering the A-site of stalled ribosomes, displacing the stalled mRNA. The ribosome then switches to translate the ORF on the tmRNA; the nascent peptide is terminated with the 'tag peptide' encoded by the tmRNA and targeted for degradation. The ribosome is freed to recommence translation, which seems to be the essential function of trans-translation. The chain is SsrA-binding protein from Staphylococcus carnosus (strain TM300).